A 118-amino-acid chain; its full sequence is Large ribosomal subunit protein bL20 (118 aa).

It belongs to the bacterial ribosomal protein bL20 family.

In terms of biological role, binds directly to 23S ribosomal RNA and is necessary for the in vitro assembly process of the 50S ribosomal subunit. It is not involved in the protein synthesizing functions of that subunit. This Desulfotalea psychrophila (strain LSv54 / DSM 12343) protein is Large ribosomal subunit protein bL20.